Here is a 265-residue protein sequence, read N- to C-terminus: MKALHKTSFWESLAIQRRVIGALLMREIITRYGRNNIGFLWLFVEPLLMTFVIVLMWKFLRADRYSTLNIVAFAITGYPMLMMWRNASKRAVGSISSNASLLYHRNVRVLDTILARMILEIAGATIAQIVIMAVLIAIGWIEMPADMFYMLMAWLLMAFFAIGLGLVICSIAFNFEPFGKIWGTLTFVMMPLSGAFFFVHNLPPKVQEYALMIPMVHGTEMFRAGYFGSDVITYENPWYIVLCNLVLLLFGLAMVSKFSKGVEPQ.

6 consecutive transmembrane segments (helical) span residues Ile-37–Trp-57, Thr-67–Trp-84, Ile-121–Ile-141, Phe-148–Ile-168, Phe-178–Phe-198, and Trp-238–Phe-258. The ABC transmembrane type-2 domain maps to Ile-37 to Phe-258.

It belongs to the ABC-2 integral membrane protein family.

The protein resides in the cell inner membrane. Functionally, may form an ATP-driven capsule polysaccharide export apparatus, in association with the CtrB and CtrD proteins. The polypeptide is Capsule polysaccharide export inner-membrane protein CtrC (ctrC) (Neisseria meningitidis serogroup B (strain ATCC BAA-335 / MC58)).